Reading from the N-terminus, the 446-residue chain is Histidine--tRNA ligase (446 aa).

The protein belongs to the class-II aminoacyl-tRNA synthetase family. As to quaternary structure, homodimer.

It localises to the cytoplasm. It catalyses the reaction tRNA(His) + L-histidine + ATP = L-histidyl-tRNA(His) + AMP + diphosphate + H(+). In Paraburkholderia phymatum (strain DSM 17167 / CIP 108236 / LMG 21445 / STM815) (Burkholderia phymatum), this protein is Histidine--tRNA ligase.